Consider the following 415-residue polypeptide: MGLTLTEKILSKAAGRQVSPGDVTEITVDLAAFHDLTGHHVVEVMENIGAVKVWDLDRFVIAFDHLAPPPNDRAAEIQVKLRKFAKSINVRNFHDVGDGILHQLLLEKYALPGQVVMAADSHTTTVGAVGAFAQGMGASDMAAILMTGKTWLMIPEPFLIRLINEPAPGVYGKDVALHILSVFKAEGLNGKSVELQVEKPKAFPMDYRATVSNMGVEFGADAAIFIPDEETVSYLSRSRGINVKPITPDPDAKYVDEYTIELNKLEPLVAAPHSVDNVKPVSEVEGIEVDYVFIGSCTNGRLSDLEAAARILKNGKVKARCIVIPASRDLFTKALDAGYVETLTKAGCVVTYGTCGPCLGGHFGVIGPGETAVSTGSRNFKGRMGSPEGKVYLANAATAAATALEGRLTDPRKYL.

[4Fe-4S] cluster contacts are provided by Cys297, Cys355, and Cys358.

This sequence belongs to the aconitase/IPM isomerase family. LeuC type 2 subfamily. As to quaternary structure, heterodimer of LeuC and LeuD. [4Fe-4S] cluster serves as cofactor.

The catalysed reaction is (2R,3S)-3-isopropylmalate = (2S)-2-isopropylmalate. Its pathway is amino-acid biosynthesis; L-leucine biosynthesis; L-leucine from 3-methyl-2-oxobutanoate: step 2/4. In terms of biological role, catalyzes the isomerization between 2-isopropylmalate and 3-isopropylmalate, via the formation of 2-isopropylmaleate. In Caldivirga maquilingensis (strain ATCC 700844 / DSM 13496 / JCM 10307 / IC-167), this protein is 3-isopropylmalate dehydratase large subunit.